The chain runs to 97 residues: Large ribosomal subunit protein uL23 (97 aa).

It belongs to the universal ribosomal protein uL23 family. Part of the 50S ribosomal subunit. Contacts protein L29, and trigger factor when it is bound to the ribosome.

In terms of biological role, one of the early assembly proteins it binds 23S rRNA. One of the proteins that surrounds the polypeptide exit tunnel on the outside of the ribosome. Forms the main docking site for trigger factor binding to the ribosome. This Acidithiobacillus ferrooxidans (strain ATCC 23270 / DSM 14882 / CIP 104768 / NCIMB 8455) (Ferrobacillus ferrooxidans (strain ATCC 23270)) protein is Large ribosomal subunit protein uL23.